The primary structure comprises 355 residues: Uroporphyrinogen decarboxylase (355 aa).

Residues Arg-27–Arg-31, Asp-78, Tyr-155, Thr-210, and His-328 contribute to the substrate site.

Belongs to the uroporphyrinogen decarboxylase family. As to quaternary structure, homodimer.

It is found in the cytoplasm. It carries out the reaction uroporphyrinogen III + 4 H(+) = coproporphyrinogen III + 4 CO2. Its pathway is porphyrin-containing compound metabolism; protoporphyrin-IX biosynthesis; coproporphyrinogen-III from 5-aminolevulinate: step 4/4. Catalyzes the decarboxylation of four acetate groups of uroporphyrinogen-III to yield coproporphyrinogen-III. The polypeptide is Uroporphyrinogen decarboxylase (Pseudomonas fluorescens (strain Pf0-1)).